Consider the following 764-residue polypeptide: Molybdenum cofactor sulfurase 1 (764 aa).

K228 carries the post-translational modification N6-(pyridoxal phosphate)lysine. Residue C394 is part of the active site. An MOSC domain is found at 607 to 762 (LRLLKQSDEE…LYCNSVVEGL (156 aa)).

This sequence belongs to the class-V pyridoxal-phosphate-dependent aminotransferase family. MOCOS subfamily. Pyridoxal 5'-phosphate is required as a cofactor.

The catalysed reaction is Mo-molybdopterin + L-cysteine + AH2 = thio-Mo-molybdopterin + L-alanine + A + H2O. Sulfurates the molybdenum cofactor. Sulfation of molybdenum is essential for xanthine dehydrogenase (XDH) and aldehyde oxidase (ADO) enzymes in which molybdenum cofactor is liganded by 1 oxygen and 1 sulfur atom in active form. The protein is Molybdenum cofactor sulfurase 1 of Aedes aegypti (Yellowfever mosquito).